The following is a 475-amino-acid chain: Cytosolic non-specific dipeptidase (475 aa).

The residue at position 2 (Ala2) is an N-acetylalanine. An N6-acetyllysine modification is found at Lys9. Ser58 is subject to Phosphoserine. Residue His99 participates in Mn(2+) binding. Asp101 is a catalytic residue. Residue Asp132 coordinates Mn(2+). The Proton acceptor role is filled by Glu166. Residues 166 to 167, Asp195, and His228 contribute to the substrate site; that span reads EE. Glu167 and Asp195 together coordinate Mn(2+). Ser299 is modified (phosphoserine). Residues Thr330, Arg343, Ser417, and His445 each coordinate substrate. A Mn(2+)-binding site is contributed by His445.

The protein belongs to the peptidase M20A family. As to quaternary structure, homodimer. Mn(2+) is required as a cofactor. As to expression, ubiquitously expressed with higher levels in kidney and liver (at protein level). Expressed in peripheral blood leukocytes. Expressed in gastric mucosa and down-regulated in gastric cancer mucosal tissues (at protein level). In terms of tissue distribution, broadly expressed in fetal tissues. Expressed in adult liver and placenta.

It localises to the cytoplasm. The catalysed reaction is Hydrolysis of dipeptides, preferentially hydrophobic dipeptides including prolyl amino acids.. It catalyses the reaction L-threonyl-L-threonine + H2O = 2 L-threonine. It carries out the reaction L-threonyl-L-serine + H2O = L-threonine + L-serine. The enzyme catalyses L-seryl-L-threonine + H2O = L-threonine + L-serine. The catalysed reaction is L-cysteinylglycine + H2O = L-cysteine + glycine. It catalyses the reaction L-alanyl-L-cysteine + H2O = L-cysteine + L-alanine. It carries out the reaction (S)-lactate + L-phenylalanine = N-[(S)-lactoyl]-L-phenylalanine + H2O. Inhibited by p-hydroxymercurybenzoate. The inhibitory concentration 50% (IC(50)) is 13 uM. Inhibited by bestatin. The inhibitory concentration 50% (IC(50)) is 7 nM at pH 9.5. In terms of biological role, catalyzes the peptide bond hydrolysis in dipeptides, displaying a non-redundant activity toward threonyl dipeptides. Mediates threonyl dipeptide catabolism in a tissue-specific way. Has high dipeptidase activity toward cysteinylglycine, an intermediate metabolite in glutathione metabolism. Metabolizes N-lactoyl-amino acids, both through hydrolysis to form lactic acid and amino acids, as well as through their formation by reverse proteolysis. Plays a role in the regulation of cell cycle arrest and apoptosis. The protein is Cytosolic non-specific dipeptidase of Homo sapiens (Human).